A 70-amino-acid polypeptide reads, in one-letter code: Myotoxin (70 aa).

A signal peptide spans 1-22 (MKILYLLFAFLFLAFLSEPGNA). Disulfide bonds link Cys26–Cys58, Cys33–Cys52, and Cys40–Cys59.

The protein belongs to the crotamine-myotoxin family. Monomer. In terms of tissue distribution, expressed by the venom gland.

The protein resides in the secreted. Functionally, cationic peptide that possesses multiple functions. It acts as a cell-penetrating peptide (CPP), and as a potent voltage-gated potassium channel (Kv) inhibitor. It exhibits antimicrobial activities, hind limb paralysis, and severe muscle necrosis by a non-enzymatic mechanism. This Crotalus adamanteus (Eastern diamondback rattlesnake) protein is Myotoxin.